A 1280-amino-acid chain; its full sequence is Ankyrin repeat and sterile alpha motif domain-containing protein 1B (1280 aa).

ANK repeat units follow at residues 2-31 (GKEQ…GLLG), 57-86 (SGYT…STNV), 90-119 (KGCF…SHSR), 126-155 (EKET…DPSM), 159-188 (RGET…NLMS), 192-221 (RKHT…DVNT), and 224-253 (EKGS…DANI). Disordered stretches follow at residues 299–322 (RHRP…LRHK), 361–399 (MESF…EEKS), 479–573 (SVSD…STGS), 704–723 (NGEA…SNTG), and 755–791 (SNLV…PSFT). Positions 482 to 491 (DAERGNHGDD) are enriched in basic and acidic residues. Composition is skewed to polar residues over residues 520–550 (KQRT…SSLG), 707–723 (ARSN…SNTG), and 770–782 (SRGQ…SSPS). SAM domains follow at residues 824–890 (CPVQ…LPRV) and 898–963 (NNPT…RLHE). Disordered regions lie at residues 960-994 (RLHE…LSQA) and 1208-1243 (GSST…MDQK). Positions 980–994 (GNHTPPQLSPSLSQA) are enriched in polar residues. The PID domain maps to 1071–1223 (IFQSCDYEAY…ESFDSKPSKP (153 aa)).

The protein localises to the cytoplasm. The protein is Ankyrin repeat and sterile alpha motif domain-containing protein 1B (anks1b) of Danio rerio (Zebrafish).